Reading from the N-terminus, the 206-residue chain is MKKQKATSQKPKITYRVNEQIRVPEVRIIFPDGTQQVMKTIDARRMAEDRNTDLIEVQPNAEPPVCKFDNLGKLLYKMAQRDKDLKKKQKTTTLKELRFHPNTDKHDFDFKTAHLEEFLRKGNRVRATIVFLGRSIIYKDKGLELADRLTERLSVVGNREGEPKFEGKKLFVYFEPDKKKIDAYERIRSKTGTPLAPLEESADAED.

Belongs to the IF-3 family. As to quaternary structure, monomer.

It localises to the cytoplasm. Functionally, IF-3 binds to the 30S ribosomal subunit and shifts the equilibrium between 70S ribosomes and their 50S and 30S subunits in favor of the free subunits, thus enhancing the availability of 30S subunits on which protein synthesis initiation begins. The protein is Translation initiation factor IF-3 of Chlorobium luteolum (strain DSM 273 / BCRC 81028 / 2530) (Pelodictyon luteolum).